Consider the following 425-residue polypeptide: Monoacylglycerol lipase ABHD2 (425 aa).

Residues 1–9 (MNAMLETPE) lie on the Cytoplasmic side of the membrane. The chain crosses the membrane as a helical; Signal-anchor for type II membrane protein span at residues 10 to 30 (LPAVFDGVKLAAVAAVLYVIV). At 31–425 (RCLNLKSPTA…DTEQVEADLE (395 aa)) the chain is on the extracellular side. Residues 128-382 (MVICPGIANH…HGGHLGFFEG (255 aa)) enclose the AB hydrolase-1 domain. The N-linked (GlcNAc...) asparagine glycan is linked to asparagine 136. The active-site Nucleophile is serine 207. Catalysis depends on charge relay system residues aspartate 345 and histidine 376.

This sequence belongs to the AB hydrolase superfamily. AB hydrolase 4 family. Present in sperm (at protein level).

The protein localises to the cell projection. It is found in the cilium. The protein resides in the flagellum membrane. It localises to the cell membrane. The enzyme catalyses an acetyl ester + H2O = an aliphatic alcohol + acetate + H(+). The catalysed reaction is Hydrolyzes glycerol monoesters of long-chain fatty acids.. It catalyses the reaction a triacylglycerol + H2O = a diacylglycerol + a fatty acid + H(+). It carries out the reaction 2-(5Z,8Z,11Z,14Z-eicosatetraenoyl)-glycerol + H2O = glycerol + (5Z,8Z,11Z,14Z)-eicosatetraenoate + H(+). The enzyme catalyses a butanoate ester + H2O = an aliphatic alcohol + butanoate + H(+). The catalysed reaction is hexadecanoate ester + H2O = an aliphatic alcohol + hexadecanoate + H(+). Its activity is regulated as follows. Acylglycerol lipase activity is activated upon binding to progesterone. In terms of biological role, progesterone-dependent acylglycerol lipase that catalyzes hydrolysis of endocannabinoid arachidonoylglycerol (AG) from cell membrane. Acts as a progesterone receptor: progesterone-binding activates the acylglycerol lipase activity, mediating degradation of 1-arachidonoylglycerol (1AG) and 2-arachidonoylglycerol (2AG) to glycerol and arachidonic acid (AA). Also displays an ester hydrolase activity against acetyl ester, butanoate ester and hexadecanoate ester. Plays a key role in sperm capacitation in response to progesterone by mediating degradation of 2AG, an inhibitor of the sperm calcium channel CatSper, leading to calcium influx via CatSper and sperm activation. May also play a role in smooth muscle cells migration. The polypeptide is Monoacylglycerol lipase ABHD2 (Homo sapiens (Human)).